Consider the following 532-residue polypeptide: Cytokinin dehydrogenase 1 (532 aa).

The signal sequence occupies residues 1 to 17; sequence MAAIYLLIAALIASSHA. 2 N-linked (GlcNAc...) asparagine glycosylation sites follow: Asn52 and Asn63. Positions 65–244 constitute an FAD-binding PCMH-type domain; the sequence is TAALPAAVLF…TRARVAVEPA (180 aa). 4 residues coordinate FAD: Phe100, Gly102, Arg103, and Gly104. At His105 the chain carries Pros-8alpha-FAD histidine. FAD is bound by residues Ser106 and Gln110. Residue Asn133 is glycosylated (N-linked (GlcNAc...) asparagine). Asp168, Thr173, Ser179, Val183, and Ile234 together coordinate FAD. 2 N-linked (GlcNAc...) asparagine glycosylation sites follow: Asn321 and Asn432. FAD is bound by residues Tyr490, Ser525, and Gln528.

It belongs to the oxygen-dependent FAD-linked oxidoreductase family. In terms of assembly, monomer. FAD is required as a cofactor.

The protein localises to the secreted. Its subcellular location is the extracellular space. It catalyses the reaction N(6)-dimethylallyladenine + A + H2O = 3-methyl-2-butenal + adenine + AH2. Functionally, catalyzes the oxidation of cytokinins, a family of N(6)-substituted adenine derivatives that are plant hormones, where the substituent is an isopentenyl group. The protein is Cytokinin dehydrogenase 1 (CKX1) of Oryza sativa subsp. japonica (Rice).